The primary structure comprises 48 residues: Delta-stichotoxin-Hmg4b (48 aa).

3 cysteine pairs are disulfide-bonded: Cys3/Cys43, Cys5/Cys33, and Cys26/Cys44.

The protein belongs to the sea anemone sodium channel inhibitory toxin family. Type II subfamily.

It localises to the secreted. The protein resides in the nematocyst. Binds specifically to voltage-gated sodium channels (Nav), thereby delaying their inactivation during signal transduction. Its toxicity is greater than that of RpII (AC P01534). This chain is Delta-stichotoxin-Hmg4b, found in Heteractis magnifica (Magnificent sea anemone).